The sequence spans 128 residues: MVVIQGKGGKADPRVIGKDEEHQKSIVKLSQIKKIMKDRTRMRISKDALVAVSACVMYLISEITDGAKNVASTDGKKKVMPKHINNAICNDTELHFVGHDWLIKNGGMKSYIAPGDFAVSSKKGSSRD.

Belongs to the histone H2A family. As to quaternary structure, the nucleosome is a histone octamer containing two molecules each of H2A, H2B, H3 and H4 assembled in one H3-H4 heterotetramer and two H2A-H2B heterodimers. The octamer wraps approximately 147 bp of DNA.

It is found in the nucleus. Its subcellular location is the chromosome. Core component of nucleosome. Nucleosomes wrap and compact DNA into chromatin, limiting DNA accessibility to the cellular machineries which require DNA as a template. Histones thereby play a central role in transcription regulation, DNA repair, DNA replication and chromosomal stability. DNA accessibility is regulated via a complex set of post-translational modifications of histones, also called histone code, and nucleosome remodeling. The chain is Histone H2A (HTA1) from Encephalitozoon cuniculi (strain GB-M1) (Microsporidian parasite).